A 786-amino-acid polypeptide reads, in one-letter code: Ribosome biogenesis protein BOP1 homolog (786 aa).

Positions 1–11 (MAKKSAIKRKV) are enriched in basic residues. The interval 1-161 (MAKKSAIKRK…NSDTSDEEDI (161 aa)) is disordered. Polar residues predominate over residues 17–26 (INEQASVSEQ). Acidic residues-rich tracts occupy residues 44–53 (EDTTDDEGID), 60–72 (TSDD…DEEG), and 82–114 (SGED…DDAK). Residues 122 to 135 (KATLSKTTGDSSNI) show a composition bias toward polar residues. Residues 141–150 (PRRDPSKPEY) show a composition bias toward basic and acidic residues. The segment covering 151–160 (ENSDTSDEED) has biased composition (acidic residues). 7 WD repeats span residues 447–488 (GHTD…RTIE), 490–528 (NDVV…KLLV), 572–614 (THFK…SQIP), 617–655 (KSKG…LIKK), 658–697 (TNSK…KPYQ), 701–740 (LHRN…DLLQ), and 756–786 (RDEF…RLYT).

Belongs to the WD repeat BOP1/ERB1 family.

It is found in the nucleus. The protein resides in the nucleolus. The protein localises to the nucleoplasm. Required for maturation of ribosomal RNAs and formation of the large ribosomal subunit. The protein is Ribosome biogenesis protein BOP1 homolog of Drosophila grimshawi (Hawaiian fruit fly).